Consider the following 384-residue polypeptide: MGNNTSRRSQSQKFKNIPSISAGSFSTMPVQHRGRRRRSKSIVGRAAQNAVLRSKEKTWIVPLILLTLLVGWYFVNPNGYIKYGIFLSYPIPGTNPAQYGKGRLDIAFCLFYALFFTFCREFIMQEIIARIGRHFNIRAPAKLRRFEEQAYTCLYFTVMGSWGLYVMKQTPMWFFNTDAFWEEYPHFYHVGSFKAFYLIEAAYWIQQALVLILQLEKPRKDFKELVVHHIITLLLIGLSYYFHFTWIGLAVFITMDTSDIWLALSKCLNYVNTVIVYPIFVIFVFVWIYMRHYLNFKIMWAVWGTMRTINSFDLDWAAEQYKCWISRDVTLILLTALQLVNIYWLILILRIGYRAFTTNDTHDERSEDEDEEVSDEKSSAKKND.

At 1–58 (MGNNTSRRSQSQKFKNIPSISAGSFSTMPVQHRGRRRRSKSIVGRAAQNAVLRSKEKT) the chain is on the cytoplasmic side. Residues 19 to 29 (SISAGSFSTMP) are compositionally biased toward polar residues. The segment at 19–42 (SISAGSFSTMPVQHRGRRRRSKSI) is disordered. Ser-41 carries the post-translational modification Phosphoserine. A helical transmembrane segment spans residues 59-79 (WIVPLILLTLLVGWYFVNPNG). Over 80–103 (YIKYGIFLSYPIPGTNPAQYGKGR) the chain is Lumenal. Residues 104–124 (LDIAFCLFYALFFTFCREFIM) traverse the membrane as a helical segment. At 125-154 (QEIIARIGRHFNIRAPAKLRRFEEQAYTCL) the chain is on the cytoplasmic side. The 217-residue stretch at 141–357 (AKLRRFEEQA…ILRIGYRAFT (217 aa)) folds into the TLC domain. The chain crosses the membrane as a helical span at residues 155–175 (YFTVMGSWGLYVMKQTPMWFF). Topologically, residues 176 to 194 (NTDAFWEEYPHFYHVGSFK) are lumenal. A helical transmembrane segment spans residues 195 to 215 (AFYLIEAAYWIQQALVLILQL). Topologically, residues 216-232 (EKPRKDFKELVVHHIIT) are cytoplasmic. The helical transmembrane segment at 233-253 (LLLIGLSYYFHFTWIGLAVFI) threads the bilayer. Residues 254-269 (TMDTSDIWLALSKCLN) lie on the Lumenal side of the membrane. The chain crosses the membrane as a helical span at residues 270-290 (YVNTVIVYPIFVIFVFVWIYM). Residues 291 to 328 (RHYLNFKIMWAVWGTMRTINSFDLDWAAEQYKCWISRD) are Cytoplasmic-facing. Residues 329-349 (VTLILLTALQLVNIYWLILIL) form a helical membrane-spanning segment. Residues 350–384 (RIGYRAFTTNDTHDERSEDEDEEVSDEKSSAKKND) are Lumenal-facing. Asn-359 carries an N-linked (GlcNAc...) asparagine glycan. The residue at position 361 (Thr-361) is a Phosphothreonine. Positions 362–384 (HDERSEDEDEEVSDEKSSAKKND) are disordered. Ser-366 is subject to Phosphoserine. A compositionally biased stretch (basic and acidic residues) spans 375–384 (DEKSSAKKND).

Belongs to the sphingosine N-acyltransferase family.

Its subcellular location is the endoplasmic reticulum membrane. It carries out the reaction a fatty acyl-CoA + sphing-4-enine = an N-acylsphing-4-enine + CoA + H(+). Its function is as follows. Component of the ceramide synthase complex required for C26-CoA-dependent ceramide synthesis. Facilitates ER-to-Golgi transport of GPI-anchored proteins. Has a role in meiosis. This chain is Sphingosine N-acyltransferase lac1 (lac1), found in Schizosaccharomyces pombe (strain 972 / ATCC 24843) (Fission yeast).